The sequence spans 79 residues: Translational regulator CsrA (79 aa).

It belongs to the CsrA/RsmA family. As to quaternary structure, homodimer; the beta-strands of each monomer intercalate to form a hydrophobic core, while the alpha-helices form wings that extend away from the core.

It is found in the cytoplasm. Functionally, a translational regulator that binds mRNA to regulate translation initiation and/or mRNA stability. Usually binds in the 5'-UTR at or near the Shine-Dalgarno sequence preventing ribosome-binding, thus repressing translation. Its main target seems to be the major flagellin gene, while its function is anatagonized by FliW. The sequence is that of Translational regulator CsrA from Leptospira biflexa serovar Patoc (strain Patoc 1 / Ames).